We begin with the raw amino-acid sequence, 376 residues long: NAD(P)H-quinone oxidoreductase subunit 1, chloroplastic (376 aa).

Transmembrane regions (helical) follow at residues 27–47 (LISI…GVLV), 65–85 (PEYA…KLLI), 97–117 (WLFS…YLVV), 130–150 (LGIF…LIAG), 166–186 (AAQS…ISLL), 251–271 (GIKF…SSLF), 272–292 (AVVL…IFFI), 310–330 (LIIP…FIFF), and 353–373 (FLLP…LTLF).

It belongs to the complex I subunit 1 family. NDH is composed of at least 16 different subunits, 5 of which are encoded in the nucleus.

It localises to the plastid. The protein resides in the chloroplast thylakoid membrane. It catalyses the reaction a plastoquinone + NADH + (n+1) H(+)(in) = a plastoquinol + NAD(+) + n H(+)(out). The enzyme catalyses a plastoquinone + NADPH + (n+1) H(+)(in) = a plastoquinol + NADP(+) + n H(+)(out). Its function is as follows. NDH shuttles electrons from NAD(P)H:plastoquinone, via FMN and iron-sulfur (Fe-S) centers, to quinones in the photosynthetic chain and possibly in a chloroplast respiratory chain. The immediate electron acceptor for the enzyme in this species is believed to be plastoquinone. Couples the redox reaction to proton translocation, and thus conserves the redox energy in a proton gradient. This chain is NAD(P)H-quinone oxidoreductase subunit 1, chloroplastic, found in Chara vulgaris (Common stonewort).